The chain runs to 443 residues: Eukaryotic translation initiation factor 3 subunit M (443 aa).

The 171-residue stretch at 205 to 375 folds into the PCI domain; it reads GLYQSTGNLA…SLIRIHSISS (171 aa). Residues 413–443 are disordered; it reads ETVAQQGLGQQRRGGKRREEKKEKEDKEEQE. Positions 429–443 are enriched in basic and acidic residues; sequence RREEKKEKEDKEEQE.

This sequence belongs to the eIF-3 subunit M family. Component of the eukaryotic translation initiation factor 3 (eIF-3) complex.

It localises to the cytoplasm. Component of the eukaryotic translation initiation factor 3 (eIF-3) complex, which is involved in protein synthesis of a specialized repertoire of mRNAs and, together with other initiation factors, stimulates binding of mRNA and methionyl-tRNAi to the 40S ribosome. The eIF-3 complex specifically targets and initiates translation of a subset of mRNAs involved in cell proliferation. The protein is Eukaryotic translation initiation factor 3 subunit M of Cryptococcus neoformans var. neoformans serotype D (strain B-3501A) (Filobasidiella neoformans).